The following is a 332-amino-acid chain: SLAM family member 6 (332 aa).

The N-terminal stretch at 1–21 (MLWLFQSLLFVFCFGPGNVVS) is a signal peptide. The Extracellular portion of the chain corresponds to 22–226 (QSSLTPLMVN…VKIQYTDTKM (205 aa)). In terms of domain architecture, Ig-like V-type spans 35 to 120 (GESVTLPLEF…ISTKTSAKLS (86 aa)). N58, N87, N137, N144, N161, N178, and N203 each carry an N-linked (GlcNAc...) asparagine glycan. The region spanning 132 to 209 (NIQVTNHSQL…AVSNLSFSVS (78 aa)) is the Ig-like C2-type domain. 2 cysteine pairs are disulfide-bonded: C147–C214 and C153–C195. Residues 227–247 (ILFMVSGICIVFGFIILLLLV) form a helical membrane-spanning segment. Residues 248–331 (LRKRRDSLSL…FSRATALDNV (84 aa)) are Cytoplasmic-facing. Y274 bears the Phosphotyrosine mark. S278 is modified (phosphoserine). 2 consecutive short sequence motifs (ITSM) follow at residues 283–288 (TVYASV) and 307–312 (TIYSTI). At Y309 the chain carries Phosphotyrosine.

As to quaternary structure, homodimer. Interacts with PTN6. Interacts (phosphorylated) with PTN11. Interacts (phosphorylated on tyrosine residues) with SH2D1A/SAP and SH2D1B/EAT2; SH2D1A and SH2D1B can associate with the same SLAMF6 molecule; interaction with SH2D1B is mediated by ITSM 2. Phosphorylation in NK cells upon engagment by SLAMF6-expressing target cells is leading to receptor activation. Expressed by all (resting and activated) natural killer cells (NK), T- and B-lymphocytes. Increased surface expression on T-cells of systemic lupus erythematosus (SLE) patients.

Its subcellular location is the cell membrane. Self-ligand receptor of the signaling lymphocytic activation molecule (SLAM) family. SLAM receptors triggered by homo- or heterotypic cell-cell interactions are modulating the activation and differentiation of a wide variety of immune cells and thus are involved in the regulation and interconnection of both innate and adaptive immune response. Activities are controlled by presence or absence of small cytoplasmic adapter proteins, SH2D1A/SAP and/or SH2D1B/EAT-2. Triggers cytolytic activity only in natural killer cells (NK) expressing high surface densities of natural cytotoxicity receptors. Positive signaling in NK cells implicates phosphorylation of VAV1. NK cell activation seems to depend on SH2D1B and not on SH2D1A. In conjunction with SLAMF1 controls the transition between positive selection and the subsequent expansion and differentiation of the thymocytic natural killer T (NKT) cell lineage. Promotes T-cell differentiation into a helper T-cell Th17 phenotype leading to increased IL-17 secretion; the costimulatory activity requires SH2D1A. Promotes recruitment of RORC to the IL-17 promoter. In conjunction with SLAMF1 and CD84/SLAMF5 may be a negative regulator of the humoral immune response. In the absence of SH2D1A/SAP can transmit negative signals to CD4(+) T-cells and NKT cells. Negatively regulates germinal center formation by inhibiting T-cell:B-cell adhesion; the function probably implicates increased association with PTPN6/SHP-1 via ITSMs in absence of SH2D1A/SAP. However, reported to be involved in maintaining B-cell tolerance in germinal centers and in preventing autoimmunity. This is SLAM family member 6 (SLAMF6) from Homo sapiens (Human).